Consider the following 333-residue polypeptide: HTH-type transcriptional repressor PurR (333 aa).

Positions 2-56 constitute an HTH lacI-type domain; the sequence is ATIKDVAKMAGVSTTTVSHVINKTRFVAKETEQQVLQAIKNLNYSPSAVARSLKV. A DNA-binding region (H-T-H motif) is located at residues 4 to 23; that stretch reads IKDVAKMAGVSTTTVSHVIN. A DNA-binding region spans residues 48 to 56; the sequence is SAVARSLKV. Tyrosine 73, lysine 189, threonine 191, phenylalanine 220, and aspartate 274 together coordinate hypoxanthine.

In terms of assembly, homodimer.

It functions in the pathway purine metabolism; purine nucleotide biosynthesis [regulation]. Its function is as follows. Is the main repressor of the genes involved in the de novo synthesis of purine nucleotides, regulating purB, purC, purEK, purF, purHD, purL, purMN and guaBA expression. PurR is allosterically activated to bind its cognate DNA by binding the purine corepressors, hypoxanthine or guanine, thereby effecting transcription repression. This Histophilus somni (strain 2336) (Haemophilus somnus) protein is HTH-type transcriptional repressor PurR.